Reading from the N-terminus, the 499-residue chain is Glycerol kinase (499 aa).

Thr-15 contacts ADP. Residues Thr-15, Thr-16, and Ser-17 each contribute to the ATP site. Thr-15 contributes to the sn-glycerol 3-phosphate binding site. Arg-19 is a binding site for ADP. Residues Arg-85, Glu-86, Tyr-137, and Asp-246 each contribute to the sn-glycerol 3-phosphate site. Positions 85, 86, 137, 246, and 247 each coordinate glycerol. Positions 268 and 311 each coordinate ADP. ATP-binding residues include Thr-268, Gly-311, Gln-315, and Gly-412. ADP is bound by residues Gly-412 and Asn-416.

It belongs to the FGGY kinase family.

It carries out the reaction glycerol + ATP = sn-glycerol 3-phosphate + ADP + H(+). It functions in the pathway polyol metabolism; glycerol degradation via glycerol kinase pathway; sn-glycerol 3-phosphate from glycerol: step 1/1. With respect to regulation, inhibited by fructose 1,6-bisphosphate (FBP). Key enzyme in the regulation of glycerol uptake and metabolism. Catalyzes the phosphorylation of glycerol to yield sn-glycerol 3-phosphate. This is Glycerol kinase from Parabacteroides distasonis (strain ATCC 8503 / DSM 20701 / CIP 104284 / JCM 5825 / NCTC 11152).